Consider the following 482-residue polypeptide: 2-succinylbenzoate--CoA ligase (482 aa).

The protein belongs to the ATP-dependent AMP-binding enzyme family. MenE subfamily.

It carries out the reaction 2-succinylbenzoate + ATP + CoA = 2-succinylbenzoyl-CoA + AMP + diphosphate. It participates in quinol/quinone metabolism; 1,4-dihydroxy-2-naphthoate biosynthesis; 1,4-dihydroxy-2-naphthoate from chorismate: step 5/7. It functions in the pathway quinol/quinone metabolism; menaquinone biosynthesis. In terms of biological role, converts 2-succinylbenzoate (OSB) to 2-succinylbenzoyl-CoA (OSB-CoA). This chain is 2-succinylbenzoate--CoA ligase, found in Bacillus thuringiensis subsp. konkukian (strain 97-27).